The sequence spans 202 residues: Na(+)-translocating NADH-quinone reductase subunit E (202 aa).

A run of 6 helical transmembrane segments spans residues 11-31 (SIFL…FLAV), 39-59 (MGLG…NQLV), 79-99 (LSFL…QILE), 114-134 (GIFL…AFAV), 144-164 (IFYG…LAAV), and 180-200 (LGSV…FSGV).

The protein belongs to the NqrDE/RnfAE family. Composed of six subunits; NqrA, NqrB, NqrC, NqrD, NqrE and NqrF.

The protein localises to the cell inner membrane. The enzyme catalyses a ubiquinone + n Na(+)(in) + NADH + H(+) = a ubiquinol + n Na(+)(out) + NAD(+). Functionally, NQR complex catalyzes the reduction of ubiquinone-1 to ubiquinol by two successive reactions, coupled with the transport of Na(+) ions from the cytoplasm to the periplasm. NqrA to NqrE are probably involved in the second step, the conversion of ubisemiquinone to ubiquinol. In Pseudoalteromonas atlantica (strain T6c / ATCC BAA-1087), this protein is Na(+)-translocating NADH-quinone reductase subunit E.